Here is a 152-residue protein sequence, read N- to C-terminus: MTEYKKVIAQNKKALFNYFIEERLEAGIVLKGSEVQSLRQGKASIEESHAADTGHEVFLYNCHIAEYEKANRFNHSTRRPRKLLLHTKEIKKIIGRIRIKGYTLVALSMYFNKKNKVKVELGIAKGKKLHDKRESIKEKDWKRDQSRLIRQK.

Belongs to the SmpB family.

Its subcellular location is the cytoplasm. Functionally, required for rescue of stalled ribosomes mediated by trans-translation. Binds to transfer-messenger RNA (tmRNA), required for stable association of tmRNA with ribosomes. tmRNA and SmpB together mimic tRNA shape, replacing the anticodon stem-loop with SmpB. tmRNA is encoded by the ssrA gene; the 2 termini fold to resemble tRNA(Ala) and it encodes a 'tag peptide', a short internal open reading frame. During trans-translation Ala-aminoacylated tmRNA acts like a tRNA, entering the A-site of stalled ribosomes, displacing the stalled mRNA. The ribosome then switches to translate the ORF on the tmRNA; the nascent peptide is terminated with the 'tag peptide' encoded by the tmRNA and targeted for degradation. The ribosome is freed to recommence translation, which seems to be the essential function of trans-translation. This Rickettsia felis (strain ATCC VR-1525 / URRWXCal2) (Rickettsia azadi) protein is SsrA-binding protein.